Reading from the N-terminus, the 528-residue chain is Calcium-dependent protein kinase 17 (528 aa).

Positions 1-65 (MGNCCSHGRD…GPIGPVLGRP (65 aa)) are disordered. The N-myristoyl glycine moiety is linked to residue Gly2. A compositionally biased stretch (low complexity) spans 20-45 (NGASASNAANSTGPTAEASVPQSKHA). The 259-residue stretch at 73-331 (YSLGKELGRG…AAQVLNHPWI (259 aa)) folds into the Protein kinase domain. Residues 79–87 (LGRGQFGVT) and Lys102 contribute to the ATP site. The active-site Proton acceptor is the Asp197. The residue at position 237 (Ser237) is a Phosphoserine. The tract at residues 337–367 (APDVPLDNAVMSRLKQFKAMNNFKKVALRVI) is autoinhibitory domain. EF-hand domains lie at 374–409 (EEIM…QGTR), 410–445 (LSEY…INRL), 446–481 (DREE…FGMN), and 485–516 (DIKE…GNPD). Residues Asp387, Asp389, Ser391, Thr393, Glu398, Asp423, Asp425, Asn427, Thr429, Glu434, Asp459, Asp461, Ser463, Tyr465, Glu470, Asp494, Asp496, Asp498, Arg500, and Glu505 each contribute to the Ca(2+) site.

This sequence belongs to the protein kinase superfamily. Ser/Thr protein kinase family. CDPK subfamily.

Its subcellular location is the membrane. It catalyses the reaction L-seryl-[protein] + ATP = O-phospho-L-seryl-[protein] + ADP + H(+). The catalysed reaction is L-threonyl-[protein] + ATP = O-phospho-L-threonyl-[protein] + ADP + H(+). Activated by calcium. Autophosphorylation may play an important role in the regulation of the kinase activity. In terms of biological role, may play a role in signal transduction pathways that involve calcium as a second messenger. This Arabidopsis thaliana (Mouse-ear cress) protein is Calcium-dependent protein kinase 17 (CPK17).